Here is an 814-residue protein sequence, read N- to C-terminus: Flagellar radial spoke protein 1 (814 aa).

The residue at position 243 (Arg-243) is an Asymmetric dimethylarginine. The tract at residues 283–346 (VQSISTGNRE…PPPPAPKVDP (64 aa)) is disordered. The span at 303 to 329 (PEEDEEEEKEEEKEEPEEGEEGEEGEG) shows a compositional bias: acidic residues. At Arg-428 the chain carries Asymmetric dimethylarginine. 6 MORN repeats span residues 577-597 (YFGS…FATG), 600-622 (YAGE…DGGT), 623-645 (YVGE…DGSV), 646-662 (YTGS…GVYW), 671-685 (GEWK…GTYE), and 691-707 (FEGE…ATYT). The segment at 739–769 (GIPPGSGDEPQLDEEGQPIEDTDKPPLPAHP) is disordered. A compositionally biased stretch (acidic residues) spans 748–758 (PQLDEEGQPIE).

Asymmetrically dimethylated at Arg-243 and Arg-428 during flagellum resorption. Probably methylated by PRMT1.

Its subcellular location is the cytoplasm. The protein resides in the cytoskeleton. It localises to the flagellum axoneme. In terms of biological role, flagellar radial spokes contribute to the regulation of dynein arm activity and thus the pattern of flagellar bending. They consist of a thin stalk, which is attached to the a subfiber of the outer doublet microtubule, and a bulbous head, which is attached to the stalk and appears to interact with the projections from the central pair of microtubules. The protein is Flagellar radial spoke protein 1 of Chlamydomonas reinhardtii (Chlamydomonas smithii).